The following is a 462-amino-acid chain: Chitinase-like mite allergen Der f 18.0101 (462 aa).

The signal sequence occupies residues 1-25; the sequence is MTRFSLTVLAVLAACFGSNIRPNVA. Residues 29 to 378 enclose the GH18 domain; that stretch reads PKTVCYYESW…HAIQSNYYHG (350 aa). A disulfide bridge connects residues Cys33 and Cys58. A glycan (N-linked (GlcNAc...) asparagine) is linked at Asn338. In terms of domain architecture, Chitin-binding type-2 spans 404-462; the sequence is VFHCHEEGFFRDKTYCATYYECKKGDFGLEKTVHHCANHLQAFDEVSRTCIDHTKIPGC. Cys439 and Cys453 are joined by a disulfide.

Belongs to the glycosyl hydrolase 18 family. Chitinase class II subfamily. In terms of tissue distribution, expressed in the upper digestive tract. Staining is observed in the ventriculus, and in very rare individuals, also in the intestine or esophagus. No expression in fecal pellets neither inside the rectum nor defecated outside of the body.

Its subcellular location is the secreted. Its function is as follows. Probably a non-catalytic chitinase-like protein, which binds to insoluble chitin and enhances the activity of the catalytic chitinases. Has weak chitin-binding activity. The chain is Chitinase-like mite allergen Der f 18.0101 from Dermatophagoides farinae (American house dust mite).